The primary structure comprises 317 residues: Ribosomal protein L11 methyltransferase (317 aa).

4 residues coordinate S-adenosyl-L-methionine: Thr-158, Gly-179, Asp-201, and Asn-244.

Belongs to the methyltransferase superfamily. PrmA family.

It localises to the cytoplasm. The catalysed reaction is L-lysyl-[protein] + 3 S-adenosyl-L-methionine = N(6),N(6),N(6)-trimethyl-L-lysyl-[protein] + 3 S-adenosyl-L-homocysteine + 3 H(+). In terms of biological role, methylates ribosomal protein L11. This is Ribosomal protein L11 methyltransferase from Streptococcus equi subsp. equi (strain 4047).